The chain runs to 352 residues: Holliday junction branch migration complex subunit RuvB (352 aa).

Residues 4-185 form a large ATPase domain (RuvB-L) region; sequence ADRLIAATGP…FGIVQRLEFY (182 aa). Residues isoleucine 24, arginine 25, glycine 66, lysine 69, threonine 70, threonine 71, 132–134, arginine 175, tyrosine 185, and arginine 222 each bind ATP; that span reads EDF. Threonine 70 contacts Mg(2+). A small ATPAse domain (RuvB-S) region spans residues 186–256; it reads STADLATIVS…IADLALNLLD (71 aa). The segment at 259-352 is head domain (RuvB-H); that stretch reads ERGFDHQDRR…VDEFLDAVDD (94 aa). Positions 295, 314, and 319 each coordinate DNA.

The protein belongs to the RuvB family. Homohexamer. Forms an RuvA(8)-RuvB(12)-Holliday junction (HJ) complex. HJ DNA is sandwiched between 2 RuvA tetramers; dsDNA enters through RuvA and exits via RuvB. An RuvB hexamer assembles on each DNA strand where it exits the tetramer. Each RuvB hexamer is contacted by two RuvA subunits (via domain III) on 2 adjacent RuvB subunits; this complex drives branch migration. In the full resolvosome a probable DNA-RuvA(4)-RuvB(12)-RuvC(2) complex forms which resolves the HJ.

The protein resides in the cytoplasm. The enzyme catalyses ATP + H2O = ADP + phosphate + H(+). In terms of biological role, the RuvA-RuvB-RuvC complex processes Holliday junction (HJ) DNA during genetic recombination and DNA repair, while the RuvA-RuvB complex plays an important role in the rescue of blocked DNA replication forks via replication fork reversal (RFR). RuvA specifically binds to HJ cruciform DNA, conferring on it an open structure. The RuvB hexamer acts as an ATP-dependent pump, pulling dsDNA into and through the RuvAB complex. RuvB forms 2 homohexamers on either side of HJ DNA bound by 1 or 2 RuvA tetramers; 4 subunits per hexamer contact DNA at a time. Coordinated motions by a converter formed by DNA-disengaged RuvB subunits stimulates ATP hydrolysis and nucleotide exchange. Immobilization of the converter enables RuvB to convert the ATP-contained energy into a lever motion, pulling 2 nucleotides of DNA out of the RuvA tetramer per ATP hydrolyzed, thus driving DNA branch migration. The RuvB motors rotate together with the DNA substrate, which together with the progressing nucleotide cycle form the mechanistic basis for DNA recombination by continuous HJ branch migration. Branch migration allows RuvC to scan DNA until it finds its consensus sequence, where it cleaves and resolves cruciform DNA. The polypeptide is Holliday junction branch migration complex subunit RuvB (Pseudomonas fluorescens (strain ATCC BAA-477 / NRRL B-23932 / Pf-5)).